Consider the following 376-residue polypeptide: UPF0754 membrane protein SSP0953 (376 aa).

2 helical membrane passes run 4-24 and 356-376; these read FLVI…TNVI and FLGF…AIFV.

Belongs to the UPF0754 family.

The protein resides in the cell membrane. This is UPF0754 membrane protein SSP0953 from Staphylococcus saprophyticus subsp. saprophyticus (strain ATCC 15305 / DSM 20229 / NCIMB 8711 / NCTC 7292 / S-41).